Here is a 154-residue protein sequence, read N- to C-terminus: Protein-export protein SecB (154 aa).

Belongs to the SecB family. In terms of assembly, homotetramer, a dimer of dimers. One homotetramer interacts with 1 SecA dimer.

It localises to the cytoplasm. In terms of biological role, one of the proteins required for the normal export of preproteins out of the cell cytoplasm. It is a molecular chaperone that binds to a subset of precursor proteins, maintaining them in a translocation-competent state. It also specifically binds to its receptor SecA. This is Protein-export protein SecB from Blochmanniella pennsylvanica (strain BPEN).